The primary structure comprises 341 residues: Cell division protein ZipA (341 aa).

Topologically, residues 1–6 (MENLQL) are periplasmic. Residues 7 to 27 (VLFVLGAIAIVAVLVHGFWSI) traverse the membrane as a helical segment. The Cytoplasmic segment spans residues 28–341 (RKQQPKSLKE…YLQRIRTQNS (314 aa)). Disordered stretches follow at residues 35–134 (LKES…PVLS) and 157–201 (QSSL…PEPE). The segment covering 90–100 (TLTSEGQMDSS) has biased composition (polar residues). Low complexity predominate over residues 175-190 (SIEVPEPVSEPVLESV). Residues 192–201 (EPEPVAPEPE) show a composition bias toward pro residues.

Belongs to the ZipA family. In terms of assembly, interacts with FtsZ via their C-terminal domains.

It localises to the cell inner membrane. Functionally, essential cell division protein that stabilizes the FtsZ protofilaments by cross-linking them and that serves as a cytoplasmic membrane anchor for the Z ring. Also required for the recruitment to the septal ring of downstream cell division proteins. In Shewanella sediminis (strain HAW-EB3), this protein is Cell division protein ZipA.